A 235-amino-acid chain; its full sequence is Octanoyltransferase (235 aa).

Positions 28–203 (GRAEETLLLL…PFAGLPADAL (176 aa)) constitute a BPL/LPL catalytic domain. Residues 66–73 (RGGDVTWH), 133–135 (SIG), and 146–148 (GFA) each bind substrate. The active-site Acyl-thioester intermediate is Cys-164. A disordered region spans residues 202 to 235 (ALPEQPRDAVQPSSCDDVHAPSTTSRRPPCPLTV).

This sequence belongs to the LipB family.

The protein resides in the cytoplasm. The enzyme catalyses octanoyl-[ACP] + L-lysyl-[protein] = N(6)-octanoyl-L-lysyl-[protein] + holo-[ACP] + H(+). It participates in protein modification; protein lipoylation via endogenous pathway; protein N(6)-(lipoyl)lysine from octanoyl-[acyl-carrier-protein]: step 1/2. In terms of biological role, catalyzes the transfer of endogenously produced octanoic acid from octanoyl-acyl-carrier-protein onto the lipoyl domains of lipoate-dependent enzymes. Lipoyl-ACP can also act as a substrate although octanoyl-ACP is likely to be the physiological substrate. In Geobacter sulfurreducens (strain ATCC 51573 / DSM 12127 / PCA), this protein is Octanoyltransferase.